The sequence spans 126 residues: Putative gene 48 protein (126 aa).

This is Putative gene 48 protein (48) from Bacillus phage SP01 (Bacteriophage SP01).